The sequence spans 339 residues: Holliday junction branch migration complex subunit RuvB (339 aa).

Residues 1–180 form a large ATPase domain (RuvB-L) region; it reads MTRTITPDMT…FGVISRLEFY (180 aa). ATP-binding positions include Leu-19, Arg-20, Gly-61, Lys-64, Thr-65, Thr-66, 127 to 129, Arg-170, Tyr-180, and Arg-217; that span reads EDF. A Mg(2+)-binding site is contributed by Thr-65. The tract at residues 181–251 is small ATPAse domain (RuvB-S); the sequence is TIEELAFIIT…VVQDALALLE (71 aa). The interval 254 to 339 is head domain (RuvB-H); the sequence is HMGFDYMDRM…EPPQGKLFQD (86 aa). Residues Arg-309 and Arg-314 each contribute to the DNA site.

It belongs to the RuvB family. As to quaternary structure, homohexamer. Forms an RuvA(8)-RuvB(12)-Holliday junction (HJ) complex. HJ DNA is sandwiched between 2 RuvA tetramers; dsDNA enters through RuvA and exits via RuvB. An RuvB hexamer assembles on each DNA strand where it exits the tetramer. Each RuvB hexamer is contacted by two RuvA subunits (via domain III) on 2 adjacent RuvB subunits; this complex drives branch migration. In the full resolvosome a probable DNA-RuvA(4)-RuvB(12)-RuvC(2) complex forms which resolves the HJ.

The protein localises to the cytoplasm. The enzyme catalyses ATP + H2O = ADP + phosphate + H(+). In terms of biological role, the RuvA-RuvB-RuvC complex processes Holliday junction (HJ) DNA during genetic recombination and DNA repair, while the RuvA-RuvB complex plays an important role in the rescue of blocked DNA replication forks via replication fork reversal (RFR). RuvA specifically binds to HJ cruciform DNA, conferring on it an open structure. The RuvB hexamer acts as an ATP-dependent pump, pulling dsDNA into and through the RuvAB complex. RuvB forms 2 homohexamers on either side of HJ DNA bound by 1 or 2 RuvA tetramers; 4 subunits per hexamer contact DNA at a time. Coordinated motions by a converter formed by DNA-disengaged RuvB subunits stimulates ATP hydrolysis and nucleotide exchange. Immobilization of the converter enables RuvB to convert the ATP-contained energy into a lever motion, pulling 2 nucleotides of DNA out of the RuvA tetramer per ATP hydrolyzed, thus driving DNA branch migration. The RuvB motors rotate together with the DNA substrate, which together with the progressing nucleotide cycle form the mechanistic basis for DNA recombination by continuous HJ branch migration. Branch migration allows RuvC to scan DNA until it finds its consensus sequence, where it cleaves and resolves cruciform DNA. The sequence is that of Holliday junction branch migration complex subunit RuvB from Geotalea daltonii (strain DSM 22248 / JCM 15807 / FRC-32) (Geobacter daltonii).